The primary structure comprises 441 residues: Mannose-6-phosphate isomerase (441 aa).

The Zn(2+) site is built by Gln-111, His-113, Glu-138, and His-285. Arg-304 is a catalytic residue.

It belongs to the mannose-6-phosphate isomerase type 1 family. As to quaternary structure, monomer. It depends on Zn(2+) as a cofactor.

The protein resides in the cytoplasm. The enzyme catalyses D-mannose 6-phosphate = D-fructose 6-phosphate. It functions in the pathway nucleotide-sugar biosynthesis; GDP-alpha-D-mannose biosynthesis; alpha-D-mannose 1-phosphate from D-fructose 6-phosphate: step 1/2. Involved in the synthesis of the GDP-mannose and dolichol-phosphate-mannose required for a number of critical mannosyl transfer reactions. The protein is Mannose-6-phosphate isomerase (PMI1) of Candida albicans (strain SC5314 / ATCC MYA-2876) (Yeast).